Consider the following 199-residue polypeptide: Outer-membrane lipoprotein LolB (199 aa).

The signal sequence occupies residues 1-28; the sequence is MSVCPAPRSPVRWLHAFTLCLLLAVLAG. The N-palmitoyl cysteine moiety is linked to residue Cys29. A lipid anchor (S-diacylglycerol cysteine) is attached at Cys29.

This sequence belongs to the LolB family. Monomer.

It is found in the cell outer membrane. Functionally, plays a critical role in the incorporation of lipoproteins in the outer membrane after they are released by the LolA protein. This Bordetella parapertussis (strain 12822 / ATCC BAA-587 / NCTC 13253) protein is Outer-membrane lipoprotein LolB.